We begin with the raw amino-acid sequence, 213 residues long: Peptidyl-tRNA hydrolase (213 aa).

Residue Tyr-26 participates in tRNA binding. The Proton acceptor role is filled by His-31. TRNA is bound by residues Tyr-78, Asn-80, and Asn-126.

This sequence belongs to the PTH family. As to quaternary structure, monomer.

Its subcellular location is the cytoplasm. The enzyme catalyses an N-acyl-L-alpha-aminoacyl-tRNA + H2O = an N-acyl-L-amino acid + a tRNA + H(+). Functionally, hydrolyzes ribosome-free peptidyl-tRNAs (with 1 or more amino acids incorporated), which drop off the ribosome during protein synthesis, or as a result of ribosome stalling. In terms of biological role, catalyzes the release of premature peptidyl moieties from peptidyl-tRNA molecules trapped in stalled 50S ribosomal subunits, and thus maintains levels of free tRNAs and 50S ribosomes. In Trichormus variabilis (strain ATCC 29413 / PCC 7937) (Anabaena variabilis), this protein is Peptidyl-tRNA hydrolase.